The following is an 80-amino-acid chain: RNA-binding protein Hfq (80 aa).

The Sm domain maps to 10-70 (DLFLNTVRKQ…ISTIMPGQPM (61 aa)).

This sequence belongs to the Hfq family. As to quaternary structure, homohexamer.

Functionally, RNA chaperone that binds small regulatory RNA (sRNAs) and mRNAs to facilitate mRNA translational regulation in response to envelope stress, environmental stress and changes in metabolite concentrations. Also binds with high specificity to tRNAs. The protein is RNA-binding protein Hfq of Agrobacterium fabrum (strain C58 / ATCC 33970) (Agrobacterium tumefaciens (strain C58)).